A 269-amino-acid chain; its full sequence is 4-chlorobenzoyl coenzyme A dehalogenase (269 aa).

Residues arginine 24 and 62-67 (AGFYLR) contribute to the substrate site. The active-site Proton acceptor is histidine 90. Residue glycine 114 participates in substrate binding. Catalysis depends on aspartate 145, which acts as the Nucleophile. A substrate-binding site is contributed by arginine 257.

It belongs to the enoyl-CoA hydratase/isomerase family. In terms of assembly, homotetramer. Homotetramer, homooctamer and larger multimers. Homotrimer.

The catalysed reaction is 4-chlorobenzoyl-CoA + H2O = 4-hydroxybenzoyl-CoA + chloride + H(+). It functions in the pathway xenobiotic degradation; 4-chlorobenzoate degradation; 4-hydroxybenzoate from 4-chlorobenzoate: step 2/3. Its activity is regulated as follows. Inactivated by 1 mM Ag(+) and by 5 mM Cu(2+). Partially inhibited by 5 mM Zn(2+), Mn(2+), Co(2+), Fe(2+) and Ni(2+). Unaffected by 10 mM Na(+), K(+) and Li(+) and by 0.5 mM Mg(2+), Mn(2+), Fe(2+), Ca(2+), Co(2+) and Zn(2+). Inhibited by the sulfhydryl blocking agent 5,5'-dithio-bis-(2-nitrobenzoate), SDS and N-bromosuccinimide. Unaffected by sodium azide and EDTA. Inactivated following treatment with diethyl pyrocarbonate; this inactivation is reversible by treatment with hydroxylamine. Functionally, dehalogenates 4-chlorobenzoyl-CoA, 4-iodobenzoyl-CoA and 4-bromobenzoyl-CoA, but not 4-fluorobenzoyl-CoA. Inactive towards crotonyl-CoA, alpha-methylcrotonyl-CoA and beta-methylcrotonyl-CoA. The chain is 4-chlorobenzoyl coenzyme A dehalogenase from Pseudomonas sp. (strain CBS-3).